The primary structure comprises 261 residues: MAEQGPMAIAMRLRNQLQNVYKLDPLRNEEEVKIKIKDLNEHIVCYLCAGYFIDATTITECLHTFCKSCIVKYLQTSKYCPMCNIKIHETQPLLNLKLDRVMQDIVYKLVPGLQESEDKRIKEFYQSRGLERIIQPSGEESVPDNTGLPYTSFDHSKAHFYRYDEQVSLCLERQSSSFSGKDKNKLTLQQKFVRCSVRAEVRHLRKVLCHRLNVEKHQVQMLFNNESLPDHMTMKRLWLSHWFGKAQPLVLHYTIKDKRTR.

The RING-type zinc finger occupies 45–84 (CYLCAGYFIDATTITECLHTFCKSCIVKYLQTSKYCPMCN).

As to quaternary structure, component of a PRC1-like complex.

The protein resides in the nucleus. Functionally, component of a Polycomb group (PcG) multiprotein PRC1-like complex, a complex class required to maintain the transcriptionally repressive state of many genes, including Hox genes, throughout development. PcG PRC1 complex acts via chromatin remodeling and modification of histones; it mediates monoubiquitination of histone H2A 'Lys-119', rendering chromatin heritably changed in its expressibility. This is Polycomb group RING finger protein 1 (pcgf1) from Danio rerio (Zebrafish).